The sequence spans 322 residues: Beta-ketoacyl-[acyl-carrier-protein] synthase III (322 aa).

Catalysis depends on residues Cys113 and His249. The ACP-binding stretch occupies residues 250 to 254 (QANIR). The active site involves Asn279.

This sequence belongs to the thiolase-like superfamily. FabH family. Homodimer.

The protein resides in the cytoplasm. It carries out the reaction malonyl-[ACP] + acetyl-CoA + H(+) = 3-oxobutanoyl-[ACP] + CO2 + CoA. Its pathway is lipid metabolism; fatty acid biosynthesis. In terms of biological role, catalyzes the condensation reaction of fatty acid synthesis by the addition to an acyl acceptor of two carbons from malonyl-ACP. Catalyzes the first condensation reaction which initiates fatty acid synthesis and may therefore play a role in governing the total rate of fatty acid production. Possesses both acetoacetyl-ACP synthase and acetyl transacylase activities. Its substrate specificity determines the biosynthesis of branched-chain and/or straight-chain of fatty acids. This Thioalkalivibrio sulfidiphilus (strain HL-EbGR7) protein is Beta-ketoacyl-[acyl-carrier-protein] synthase III.